Reading from the N-terminus, the 324-residue chain is [Acyl-carrier-protein] phosphodiesterase PptH (324 aa).

Mn(2+)-binding residues include D22, H24, and D51. 4 residues coordinate Fe cation: D51, N79, H205, and H246. Position 248 (H248) interacts with Mn(2+).

Belongs to the metallophosphoesterase superfamily. Fe(3+) is required as a cofactor. Requires Mn(2+) as cofactor.

It carries out the reaction holo-[ACP] + H2O = apo-[ACP] + (R)-4'-phosphopantetheine + H(+). Functionally, catalyzes the hydrolysis of the phosphopantetheine group from substrate holo-carrier proteins. This chain is [Acyl-carrier-protein] phosphodiesterase PptH, found in Mycobacterium tuberculosis (strain ATCC 25618 / H37Rv).